Consider the following 579-residue polypeptide: MFS-type transporter olcL (579 aa).

Over residues 1-24 the composition is skewed to polar residues; the sequence is MANIGGSNAVSSAQGSQISDSPTT. Positions 1 to 75 are disordered; the sequence is MANIGGSNAV…GFGEDGCQSD (75 aa). Residues 25-35 show a composition bias toward basic and acidic residues; it reads VDDRLDEHKET. Residues 36–54 show a composition bias toward polar residues; it reads STQSIDHSENITQSPTSLQ. Asparagine 45 carries N-linked (GlcNAc...) asparagine glycosylation. 9 helical membrane-spanning segments follow: residues 85–105, 121–141, 159–179, 183–203, 214–234, 241–261, 282–302, 310–330, and 355–375; these read LAAI…DNTI, GDVG…TLVF, AVFE…GLII, IAGL…SQSV, LVGG…GAFT, WCFY…LLFF, LIGL…LQWG, SGRI…FIMV, and LFNF…PVWF. The N-linked (GlcNAc...) asparagine glycan is linked to asparagine 380. A run of 5 helical transmembrane segments spans residues 388 to 408, 411 to 431, 439 to 459, 479 to 501, and 553 to 573; these read LMNL…GYGV, IGYY…GAGL, FGPS…GLGL, IAIV…QNVF, and FYVG…IQWI.

The protein belongs to the major facilitator superfamily. TCR/Tet family.

The protein resides in the peroxisome membrane. MFS-type transporter; part of the gene cluster that mediates the biosynthesis of 15-deoxyoxalicine B. The first step of the pathway is the synthesis of nicotinyl-CoA from nicotinic acid by the nicotinic acid-CoA ligase olcI. Nicotinyl-CoA is then a substrate of polyketide synthase olcA to produce 4-hydroxy-6-(3-pyridinyl)-2H-pyran-2-one (HPPO) which is further prenylated by the polyprenyl transferase olcH to yield geranylgeranyl-HPPO. Geranylgeranyl pyrophosphate is provided by the cluster-specific geranylgeranyl pyrophosphate synthase olcC. The FAD-dependent monooxygenase olcE catalyzes the epoxidation of geranylgeranyl-HPPO and the terpene cyclase olcD catalyzes the cyclization of the terpenoid component, resulting in the formation of the tricyclic terpene moiety seen in predecaturin E. The cytochrome P450 monooxygenase then catalyzes the allylic oxidation of predecaturin E, which is followed by spirocylization with concomitant loss of one molecule of water to form decaturin E. Decaturin E is the substrate of the cytochrome P450 monooxygenase olcJ which hydroxylates it at the C-29 position to form decaturin F. The short-chain dehydrogenase/reductase olcF may catalyze the oxidation of decaturin F to generate the 29-hydroxyl-27-one intermediate, and subsequent hemiacetal formation probably leads to the formation of decaturin C. The dioxygenase olcK may be a peroxisomal enzyme that catalyzes the hydroxylation of decaturin C into decaturin A once decaturin C is shuttled into the peroxisome by the MFS transporter olcL. Finally the cytochrome P450 monooxygenase olcB catalyzes the oxidative rearrangement to yield 15-deoxyoxalicine B. In the absence of olcJ, decaturin E may be shunted to a pathway in which it is oxidized to a ketone, possibly by olcF, to form decaturin D, which undergoes further allylic oxidation to yield decaturin G. Moreover, in the absence of oclK or oclL, oclB can convert decaturin C into 15-deoxyoxalicine A. This is MFS-type transporter olcL from Penicillium canescens.